The following is a 264-amino-acid chain: Myozenin-2 (264 aa).

Arginine 53 carries the omega-N-methylarginine modification. Residues glutamate 98 to isoleucine 134 form a disordered region. Serine 101 carries the phosphoserine modification. The span at phenylalanine 106–proline 120 shows a compositional bias: pro residues. Phosphothreonine occurs at positions 107 and 111. Phosphoserine is present on serine 116.

The protein belongs to the myozenin family. In terms of assembly, interacts via its C-terminus with spectrin repeats 3 and 4 of ACTN2. Interacts with ACTN1, LDB3, MYOT and PPP3CA.

It is found in the cytoplasm. It localises to the myofibril. The protein resides in the sarcomere. Its subcellular location is the z line. In terms of biological role, myozenins may serve as intracellular binding proteins involved in linking Z line proteins such as alpha-actinin, gamma-filamin, TCAP/telethonin, LDB3/ZASP and localizing calcineurin signaling to the sarcomere. Plays an important role in the modulation of calcineurin signaling. May play a role in myofibrillogenesis. The polypeptide is Myozenin-2 (MYOZ2) (Bos taurus (Bovine)).